Consider the following 88-residue polypeptide: Small ribosomal subunit protein bS16c (88 aa).

As to quaternary structure, component of the chloroplast small ribosomal subunit (SSU). Mature 70S chloroplast ribosomes of higher plants consist of a small (30S) and a large (50S) subunit. The 30S small subunit contains 1 molecule of ribosomal RNA (16S rRNA) and 24 different proteins. The 50S large subunit contains 3 rRNA molecules (23S, 5S and 4.5S rRNA) and 33 different proteins.

The protein localises to the plastid. The protein resides in the chloroplast. Its function is as follows. Component of the chloroplast ribosome (chloro-ribosome), a dedicated translation machinery responsible for the synthesis of chloroplast genome-encoded proteins, including proteins of the transcription and translation machinery and components of the photosynthetic apparatus. The chain is Small ribosomal subunit protein bS16c from Spinacia oleracea (Spinach).